The following is an 89-amino-acid chain: Probable Fe(2+)-trafficking protein (89 aa).

The protein belongs to the Fe(2+)-trafficking protein family.

In terms of biological role, could be a mediator in iron transactions between iron acquisition and iron-requiring processes, such as synthesis and/or repair of Fe-S clusters in biosynthetic enzymes. This chain is Probable Fe(2+)-trafficking protein, found in Stenotrophomonas maltophilia (strain R551-3).